Consider the following 517-residue polypeptide: Cytochrome P450 monooxygenase bsc11 (517 aa).

Residues 16-33 (ALPLTCTGLIIIFAFYLS) traverse the membrane as a helical segment. An N-linked (GlcNAc...) asparagine glycan is attached at N204. Residue C448 coordinates heme.

It belongs to the cytochrome P450 family. Heme is required as a cofactor.

Its subcellular location is the membrane. It functions in the pathway mycotoxin biosynthesis. In terms of biological role, cytochrome P450 monooxygenase; part of the gene cluster that mediates the biosynthesis of the diterpene glucoside brassicicene C. In the first step of the brassicicene C biosynthesis, the bifunctional diterpene synthase bsc8 that possesses both prenyl transferase and terpene cyclase activity, converts isopentenyl diphosphate and dimethylallyl diphosphate into geranylgeranyl diphosphate (GGDP) that is further converted into fusicocca-2,10(14)-diene, the first precursor for brassicicene C. Fusicocca-2,10(14)-diene is then substrate of cytochrome P450 monooxygenase bsc1 for hydroxylation at the C-8 position. Oxidation at C-16 position to aldehyde is then catalyzed by the cytochrome P450 monooyxygenase bsc7, yielding fusicocca-2,10(14)-diene-8-beta,16-diol. Follows the isomerization of the double bond and reduction of aldehyde to alcohol catalyzed by the short-chain dehydrogenase/reductase bsc3 to yield the diol compound fusicocca-1,10(14)-diene-8 beta,16-diol. The next step is the oxidation at the C-3 position of fusicocca-2,10(14)-diene-8-beta,16-diol catalyzed by the alpha-ketoglutarate dependent dioxygenase bsc9, to produce a triol compound. Methylation of the hydroxy group at position 16 is performed by the methyltransferase bsc6. 16-O-methylation is followed by oxidation at the C-13 position to ketone and an alkyl shift of the methyl group leads to brassicicene C. Although the probable acetyltransferase bsc4 is included in the gene cluster, no acetylation reactions are necessary for brassicicene C biosynthesis. However, the fact that brassicicene E, which is a structurally related compound having an acetoxy group at position 12, was previously isolated from another strain of A.brassicicola suggests that the ATCC 96836 strain might also produce a small amount of brassicicene E. This chain is Cytochrome P450 monooxygenase bsc11, found in Alternaria brassicicola (Dark leaf spot agent).